The following is a 317-amino-acid chain: DNA repair nuclease/redox regulator APEX1 (317 aa).

Positions 1–32 (MPKRGKRAAAEDGEEPKSEPETKKSKGAAKKT) are necessary for interaction with YBX1, binding to RNA, association together with NPM1 to rRNA, endoribonuclease activity on abasic RNA and localization in the nucleoli. A disordered region spans residues 1-57 (MPKRGKRAAAEDGEEPKSEPETKKSKGAAKKTEKEAAGEGPVLYEDPPDQKTSASGK). Lysine 6 carries the post-translational modification N6-acetyllysine; by EP300. The Nuclear localization signal (NLS) signature appears at 8 to 12 (AAAED). Basic and acidic residues predominate over residues 15 to 37 (EPKSEPETKKSKGAAKKTEKEAA). Serine 18 bears the Phosphoserine mark. The segment at 22–32 (TKKSKGAAKKT) is necessary for interaction with NPM1 and for efficient rRNA binding. Lysine 26, lysine 30, lysine 31, and lysine 34 each carry N6-acetyllysine. The residue at position 53 (serine 53) is a Phosphoserine. The Nuclear export signal (NES) signature appears at 63–79 (ICSWNVDGLRAWIKKKG). Cysteine 64 is subject to S-nitrosocysteine; alternate. A disulfide bond links cysteine 64 and cysteine 92. Residue aspartate 69 participates in Mg(2+) binding. Cysteine 92 is modified (S-nitrosocysteine; alternate). Position 95 (glutamate 95) interacts with Mg(2+). Residue tyrosine 170 is part of the active site. Lysine 196 is modified (N6-acetyllysine). Mg(2+)-binding residues include aspartate 209 and asparagine 211. Residue aspartate 209 is the Proton donor/acceptor of the active site. Threonine 232 is subject to Phosphothreonine; by CDK5. The segment at 288–317 (HSLLPALCDSKIRSKALGSDHCPITLYLAL) is mitochondrial targeting sequence (MTS). Position 307 (aspartate 307) interacts with Mg(2+). An S-nitrosocysteine modification is found at cysteine 309.

Belongs to the DNA repair enzymes AP/ExoA family. As to quaternary structure, monomer. Homodimer; disulfide-linked. Component of the SET complex, composed of at least APEX1, SET, ANP32A, HMGB2, NME1 and TREX1. Associates with the dimer XRCC5/XRCC6 in a DNA-dependent manner. Interacts with SIRT1; the interaction is increased in the context of genotoxic stress. Interacts with HDAC1, HDAC2 and HDAC3; the interactions are not dependent on the APEX1 acetylation status. Interacts with XRCC1; the interaction is induced by SIRT1 and increased with the APEX1 acetylated form. Interacts with NPM1 (via N-terminal domain); the interaction is RNA-dependent and decreases in hydrogen peroxide-damaged cells. Interacts (via N-terminus) with YBX1 (via C-terminus); the interaction is increased in presence of APEX1 acetylated. Interacts with HNRNPL; the interaction is DNA-dependent. Interacts (via N-terminus) with KPNA1 and KPNA2. Interacts with TXN; the interaction stimulates the FOS/JUN AP-1 complex DNA-binding activity in a redox-dependent manner. Interacts with GZMA, KRT8, MDM2, POLB, PRDX6, PRPF19, RPLP0, TOMM20 and WDR77. Binds to CDK5. The cofactor is Mg(2+). Mn(2+) is required as a cofactor. In terms of processing, phosphorylated. Phosphorylation by kinase PKC or casein kinase CK2 results in enhanced redox activity that stimulates binding of the FOS/JUN AP-1 complex to its cognate binding site. AP-endodeoxyribonuclease activity is not affected by CK2-mediated phosphorylation. Phosphorylation of Thr-232 by CDK5 in response to MPP(+)/MPTP (1-methyl-4-phenylpyridinium) reduces AP-endodeoxyribonuclease activity resulting in accumulation of DNA damage and contributing to neuronal death. Acetylated on Lys-6. Acetylation is increased by the transcriptional coactivator EP300 acetyltransferase, genotoxic agents like H(2)O(2) and methyl methanesulfonate (MMS). Acetylation increases its binding affinity to the negative calcium response element (nCaRE) DNA promoter. The acetylated form induces a stronger binding of YBX1 to the Y-box sequence in the MDR1 promoter than the unacetylated form. Deacetylated on lysines. Lys-6 is deacetylated by SIRT1. Post-translationally, cleaved at Lys-30 by granzyme A to create the mitochondrial form; leading in reduction of binding to DNA, AP endodeoxyribonuclease activity, redox activation of transcription factors and to enhanced cell death. Cleaved by granzyme K; leading to intracellular ROS accumulation and enhanced cell death after oxidative stress. In terms of processing, cys-64 and Cys-92 are nitrosylated in response to nitric oxide (NO) and lead to the exposure of the nuclear export signal (NES). Ubiquitinated by MDM2; leading to translocation to the cytoplasm and proteasomal degradation.

It is found in the nucleus. The protein localises to the nucleolus. It localises to the nucleus speckle. Its subcellular location is the endoplasmic reticulum. The protein resides in the cytoplasm. It is found in the mitochondrion. The catalysed reaction is a deoxyribonucleotide-2'-deoxyribose-5'-monophosphate-DNA + H2O = a 5'-end 2'-deoxyribose-5'-monophosphate-DNA + a 3'-end 2'-deoxyribonucleotide-DNA + H(+). The enzyme catalyses Exonucleolytic cleavage in the 3'- to 5'-direction to yield nucleoside 5'-phosphates.. It carries out the reaction a 3'-end 2'-deoxyribonucleotide-3'-phosphoglycolate-DNA + H2O = 2-phosphoglycolate + a 3'-end 2'-deoxyribonucleotide-DNA + H(+). It catalyses the reaction a 3'-end 2'-deoxyribonucleotide-8-oxoguanine-DNA + H2O = 8-oxo-dGMP + a 3'-end 2'-deoxyribonucleotide-DNA + H(+). Its activity is regulated as follows. NPM1 stimulates endodeoxyribonuclease activity on double-stranded DNA with AP sites, but inhibits endoribonuclease activity on single-stranded RNA containing AP sites. In terms of biological role, multifunctional protein that plays a central role in the cellular response to oxidative stress. The two major activities of APEX1 are DNA repair and redox regulation of transcriptional factors. Functions as an apurinic/apyrimidinic (AP) endodeoxyribonuclease in the base excision repair (BER) pathway of DNA lesions induced by oxidative and alkylating agents. Initiates repair of AP sites in DNA by catalyzing hydrolytic incision of the phosphodiester backbone immediately adjacent to the damage, generating a single-strand break with 5'-deoxyribose phosphate and 3'-hydroxyl ends. Also incises at AP sites in the DNA strand of DNA/RNA hybrids, single-stranded DNA regions of R-loop structures, and single-stranded RNA molecules. Operates at switch sites of immunoglobulin (Ig) constant regions where it mediates Ig isotype class switch recombination. Processes AP sites induced by successive action of AICDA and UNG. Generates staggered nicks in opposite DNA strands resulting in the formation of double-strand DNA breaks that are finally resolved via non-homologous end joining repair pathway. Has 3'-5' exodeoxyribonuclease activity on mismatched deoxyribonucleotides at the 3' termini of nicked or gapped DNA molecules during short-patch BER. Possesses DNA 3' phosphodiesterase activity capable of removing lesions (such as phosphoglycolate and 8-oxoguanine) blocking the 3' side of DNA strand breaks. Also acts as an endoribonuclease involved in the control of single-stranded RNA metabolism. Plays a role in regulating MYC mRNA turnover by preferentially cleaving in between UA and CA dinucleotides of the MYC coding region determinant (CRD). In association with NMD1, plays a role in the rRNA quality control process during cell cycle progression. Acts as a loading factor for POLB onto non-incised AP sites in DNA and stimulates the 5'-terminal deoxyribose 5'-phosphate (dRp) excision activity of POLB. Exerts reversible nuclear redox activity to regulate DNA binding affinity and transcriptional activity of transcriptional factors by controlling the redox status of their DNA-binding domain, such as the FOS/JUN AP-1 complex after exposure to IR. Involved in calcium-dependent down-regulation of parathyroid hormone (PTH) expression by binding to negative calcium response elements (nCaREs). Together with HNRNPL or the dimer XRCC5/XRCC6, associates with nCaRE, acting as an activator of transcriptional repression. May also play a role in the epigenetic regulation of gene expression by participating in DNA demethylation. Stimulates the YBX1-mediated MDR1 promoter activity, when acetylated at Lys-6 and Lys-7, leading to drug resistance. Plays a role in protection from granzyme-mediated cellular repair leading to cell death. Binds DNA and RNA. Associates, together with YBX1, on the MDR1 promoter. Together with NPM1, associates with rRNA. This Rattus norvegicus (Rat) protein is DNA repair nuclease/redox regulator APEX1 (Apex1).